The sequence spans 170 residues: Ureidoglycolate lyase (170 aa).

This sequence belongs to the ureidoglycolate lyase family. Homodimer. The cofactor is Ni(2+).

It carries out the reaction (S)-ureidoglycolate = urea + glyoxylate. Its pathway is nitrogen metabolism; (S)-allantoin degradation. Its function is as follows. Catalyzes the catabolism of the allantoin degradation intermediate (S)-ureidoglycolate, generating urea and glyoxylate. Involved in the utilization of allantoin as nitrogen source. The polypeptide is Ureidoglycolate lyase (Pseudomonas syringae pv. syringae (strain B728a)).